The sequence spans 885 residues: DDT domain-containing protein DDB_G0282237 (885 aa).

The 106-residue stretch at 20–125 (EEYFVIKFTK…GEIVSFKKAN (106 aa)) folds into the WAC domain. Disordered stretches follow at residues 141-184 (ESDE…INAL), 201-264 (DDEN…SVRK), and 367-431 (LEDT…KENE). Low complexity predominate over residues 154–180 (SSSSSSTTTTTTTPTTPPTTTTTTSSS). Residues 210-264 (KNNGDTSSDKKGEKEKEKEKEKEKEKEKEKEKEKEKEKEKEKEKEKDSDTKSVRK) are compositionally biased toward basic and acidic residues. Residues 217–260 (SDKKGEKEKEKEKEKEKEKEKEKEKEKEKEKEKEKEKEKDSDTK) adopt a coiled-coil conformation. Residues 367 to 379 (LEDTEEESVDIES) show a composition bias toward acidic residues. The segment covering 380-396 (NDNSNSNGNSNSNNNLD) has biased composition (low complexity). A DDT domain is found at 443–503 (SNTFGDFLMV…MKTIFTLPSY (61 aa)). Residues 530–565 (FQNEVKRIAIEEKEKQEKLKQLEEQNIRMLNLANEL) are a coiled coil. Disordered stretches follow at residues 562–632 (ANEL…WKEE) and 707–744 (KQDDAAAAAEDDDENNEDDEEQQQQEVKKPKGAKQKKP). A compositionally biased stretch (acidic residues) spans 567–577 (GSDDEDDEMKL). The segment covering 578–603 (DEDGNEIKKDVEMKDNDGTKDTKKDD) has biased composition (basic and acidic residues). Coiled-coil stretches lie at residues 593–628 (NDGTKDTKKDDEENEEEEEEEEEEEEEVASDEGEEE) and 674–782 (ASEK…RDRN). Acidic residues-rich tracts occupy residues 604 to 631 (EENEEEEEEEEEEEEEVASDEGEEEWKE) and 715 to 729 (AEDDDENNEDDEEQQ).

It is found in the nucleus. The sequence is that of DDT domain-containing protein DDB_G0282237 from Dictyostelium discoideum (Social amoeba).